Here is a 401-residue protein sequence, read N- to C-terminus: 8-amino-7-oxononanoate synthase (401 aa).

Arg24 contacts substrate. 111–112 provides a ligand contact to pyridoxal 5'-phosphate; sequence GF. His137 provides a ligand contact to substrate. The pyridoxal 5'-phosphate site is built by Ser183, His211, and Thr240. Position 243 is an N6-(pyridoxal phosphate)lysine (Lys243). Residue Thr357 participates in substrate binding.

This sequence belongs to the class-II pyridoxal-phosphate-dependent aminotransferase family. BioF subfamily. As to quaternary structure, homodimer. The cofactor is pyridoxal 5'-phosphate.

The enzyme catalyses 6-carboxyhexanoyl-[ACP] + L-alanine + H(+) = (8S)-8-amino-7-oxononanoate + holo-[ACP] + CO2. It functions in the pathway cofactor biosynthesis; biotin biosynthesis. Functionally, catalyzes the decarboxylative condensation of pimeloyl-[acyl-carrier protein] and L-alanine to produce 8-amino-7-oxononanoate (AON), [acyl-carrier protein], and carbon dioxide. The protein is 8-amino-7-oxononanoate synthase of Xanthomonas euvesicatoria pv. vesicatoria (strain 85-10) (Xanthomonas campestris pv. vesicatoria).